The primary structure comprises 237 residues: Phosphoribosylaminoimidazole-succinocarboxamide synthase (237 aa).

It belongs to the SAICAR synthetase family.

It catalyses the reaction 5-amino-1-(5-phospho-D-ribosyl)imidazole-4-carboxylate + L-aspartate + ATP = (2S)-2-[5-amino-1-(5-phospho-beta-D-ribosyl)imidazole-4-carboxamido]succinate + ADP + phosphate + 2 H(+). Its pathway is purine metabolism; IMP biosynthesis via de novo pathway; 5-amino-1-(5-phospho-D-ribosyl)imidazole-4-carboxamide from 5-amino-1-(5-phospho-D-ribosyl)imidazole-4-carboxylate: step 1/2. The chain is Phosphoribosylaminoimidazole-succinocarboxamide synthase from Pseudomonas fluorescens (strain ATCC BAA-477 / NRRL B-23932 / Pf-5).